The sequence spans 73 residues: Large ribosomal subunit protein uL30 (73 aa).

It belongs to the universal ribosomal protein uL30 family. Part of the 50S ribosomal subunit.

This is Large ribosomal subunit protein uL30 from Borreliella afzelii (strain PKo) (Borrelia afzelii).